Reading from the N-terminus, the 149-residue chain is UPF0260 protein PSEEN4031 (149 aa).

It belongs to the UPF0260 family.

This chain is UPF0260 protein PSEEN4031, found in Pseudomonas entomophila (strain L48).